The following is a 200-amino-acid chain: Inner membrane-spanning protein YciB (200 aa).

6 helical membrane-spanning segments follow: residues 1–21 (MPPL…FFAN), 37–57 (IGAP…IALA), 66–86 (LAIM…LTLW), 103–123 (LFGG…GYVF), 136–156 (KLTL…EIVW), and 167–187 (FKVW…MPLI).

Belongs to the YciB family.

It is found in the cell inner membrane. Functionally, plays a role in cell envelope biogenesis, maintenance of cell envelope integrity and membrane homeostasis. This Brucella melitensis biotype 1 (strain ATCC 23456 / CCUG 17765 / NCTC 10094 / 16M) protein is Inner membrane-spanning protein YciB.